The chain runs to 472 residues: Keratin, type I cytoskeletal 14 (472 aa).

Positions 1-114 (MTTCSRQFTS…AGGDGLLVGS (114 aa)) are head. The interval 115 to 150 (EKVTMQNLNDRLASYLDKVRALEEANADLEVKIRDW) is coil 1A. The IF rod domain occupies 115 to 426 (EKVTMQNLND…RLLEGEDAHL (312 aa)). Positions 151-168 (YQRQRPAEIKDYSPYFKT) are linker 1. Residues 169–260 (IEDLRNKILT…KNHEEEMNAL (92 aa)) are coil 1B. The linker 12 stretch occupies residues 261 to 283 (RGQVGGDVNVEMDAAPGVDLSRI). A coil 2 region spans residues 284 to 422 (LNEMRDQYEK…ATYRRLLEGE (139 aa)). The interval 423 to 472 (DAHLSSSQFSSGSQSSRDVTSSSRQIRTKVMDVHDGKVVSTHEQVLRTKN) is tail. The segment at 425–472 (HLSSSQFSSGSQSSRDVTSSSRQIRTKVMDVHDGKVVSTHEQVLRTKN) is interaction with Type I keratins and keratin filaments. Residues 426 to 472 (LSSSQFSSGSQSSRDVTSSSRQIRTKVMDVHDGKVVSTHEQVLRTKN) form a disordered region. Low complexity predominate over residues 427 to 445 (SSSQFSSGSQSSRDVTSSS). Ser-435 bears the Phosphoserine mark.

It belongs to the intermediate filament family. As to quaternary structure, heterotetramer of two type I and two type II keratins. Forms a disulfide-linked heterodimer (via 2B domains) with KRT5 (via 2B domains). Forms a heterodimer with KRT1; the interaction is more abundant in the absence of KRT5. Interacts with PLEC isoform 1C, when in a heterodimer with KRT5. Interacts with TRADD and with keratin filaments. Associates with other type I keratins. Interacts with EPPK1. Interacts with KLHL24. Interacts with PKP1 (via N-terminus) and PKP2. In terms of processing, a disulfide bond is formed between rather than within filaments and promotes the formation of a keratin filament cage around the nucleus. Ubiquitinated by the BCR(KLHL24) E3 ubiquitin ligase complex. In terms of tissue distribution, expressed in the corneal epithelium (at protein level). Detected in the basal layer, lowered within the more apically located layers specifically in the stratum spinosum, stratum granulosum but is not detected in stratum corneum. Strongly expressed in the outer root sheath of anagen follicles but not in the germinative matrix, inner root sheath or hair. Found in keratinocytes surrounding the club hair during telogen.

The protein localises to the cytoplasm. The protein resides in the nucleus. In terms of biological role, the nonhelical tail domain is involved in promoting KRT5-KRT14 filaments to self-organize into large bundles and enhances the mechanical properties involved in resilience of keratin intermediate filaments in vitro. This Homo sapiens (Human) protein is Keratin, type I cytoskeletal 14 (KRT14).